We begin with the raw amino-acid sequence, 448 residues long: tRNA-2-methylthio-N(6)-dimethylallyladenosine synthase (448 aa).

The MTTase N-terminal domain maps to 2 to 119 (KKLYIKTFGC…LSDLIAQRRK (118 aa)). [4Fe-4S] cluster is bound by residues Cys-11, Cys-48, Cys-82, Cys-156, Cys-160, and Cys-163. The 234-residue stretch at 142–375 (RQTRGSAYVS…LALIEGQSNQ (234 aa)) folds into the Radical SAM core domain. The 67-residue stretch at 378–444 (QKMLGKTERV…NYTLRGELVE (67 aa)) folds into the TRAM domain.

Belongs to the methylthiotransferase family. MiaB subfamily. In terms of assembly, monomer. It depends on [4Fe-4S] cluster as a cofactor.

It localises to the cytoplasm. The enzyme catalyses N(6)-dimethylallyladenosine(37) in tRNA + (sulfur carrier)-SH + AH2 + 2 S-adenosyl-L-methionine = 2-methylsulfanyl-N(6)-dimethylallyladenosine(37) in tRNA + (sulfur carrier)-H + 5'-deoxyadenosine + L-methionine + A + S-adenosyl-L-homocysteine + 2 H(+). Catalyzes the methylthiolation of N6-(dimethylallyl)adenosine (i(6)A), leading to the formation of 2-methylthio-N6-(dimethylallyl)adenosine (ms(2)i(6)A) at position 37 in tRNAs that read codons beginning with uridine. In Polynucleobacter asymbioticus (strain DSM 18221 / CIP 109841 / QLW-P1DMWA-1) (Polynucleobacter necessarius subsp. asymbioticus), this protein is tRNA-2-methylthio-N(6)-dimethylallyladenosine synthase.